The primary structure comprises 480 residues: Aspartyl/glutamyl-tRNA(Asn/Gln) amidotransferase subunit B (480 aa).

This sequence belongs to the GatB/GatE family. GatB subfamily. In terms of assembly, heterotrimer of A, B and C subunits.

It carries out the reaction L-glutamyl-tRNA(Gln) + L-glutamine + ATP + H2O = L-glutaminyl-tRNA(Gln) + L-glutamate + ADP + phosphate + H(+). The catalysed reaction is L-aspartyl-tRNA(Asn) + L-glutamine + ATP + H2O = L-asparaginyl-tRNA(Asn) + L-glutamate + ADP + phosphate + 2 H(+). Functionally, allows the formation of correctly charged Asn-tRNA(Asn) or Gln-tRNA(Gln) through the transamidation of misacylated Asp-tRNA(Asn) or Glu-tRNA(Gln) in organisms which lack either or both of asparaginyl-tRNA or glutaminyl-tRNA synthetases. The reaction takes place in the presence of glutamine and ATP through an activated phospho-Asp-tRNA(Asn) or phospho-Glu-tRNA(Gln). The sequence is that of Aspartyl/glutamyl-tRNA(Asn/Gln) amidotransferase subunit B from Streptococcus pneumoniae (strain P1031).